Here is a 292-residue protein sequence, read N- to C-terminus: NAD kinase (292 aa).

The active-site Proton acceptor is the Asp-73. Residues 73–74 (DG), 147–148 (NE), His-158, Arg-175, Asp-177, 188–193 (TGYSLS), and Gln-248 contribute to the NAD(+) site.

It belongs to the NAD kinase family. Requires a divalent metal cation as cofactor.

The protein resides in the cytoplasm. It catalyses the reaction NAD(+) + ATP = ADP + NADP(+) + H(+). Functionally, involved in the regulation of the intracellular balance of NAD and NADP, and is a key enzyme in the biosynthesis of NADP. Catalyzes specifically the phosphorylation on 2'-hydroxyl of the adenosine moiety of NAD to yield NADP. The chain is NAD kinase from Buchnera aphidicola subsp. Baizongia pistaciae (strain Bp).